Here is a 207-residue protein sequence, read N- to C-terminus: Guanylate kinase (207 aa).

The 181-residue stretch at 5-185 (GFVLLISGPS…SYEALRAILI (181 aa)) folds into the Guanylate kinase-like domain. Position 12–19 (12–19 (GPSGAGKS)) interacts with ATP.

It belongs to the guanylate kinase family.

It localises to the cytoplasm. It catalyses the reaction GMP + ATP = GDP + ADP. Essential for recycling GMP and indirectly, cGMP. The polypeptide is Guanylate kinase (gmk) (Campylobacter jejuni subsp. jejuni serotype O:2 (strain ATCC 700819 / NCTC 11168)).